A 363-amino-acid polypeptide reads, in one-letter code: Adenosine deaminase (363 aa).

His42 and His44 together coordinate Zn(2+). A purine D-ribonucleoside contacts are provided by residues 44–46 (HLD), Asp172, and Gly201. The interval 170-184 (IGDTGHEAANIKASA) is gating helix loop; regulates binding affinity for substrates and thus substrate selectivity. Position 226 (His226) interacts with Zn(2+). Residues Glu229, His253, and Asp310 each contribute to the a purine D-ribonucleoside site. Position 310 (Asp310) interacts with Zn(2+).

This sequence belongs to the metallo-dependent hydrolases superfamily. Adenosine and AMP deaminases family. Zn(2+) is required as a cofactor.

It carries out the reaction adenosine + H2O + H(+) = inosine + NH4(+). It catalyses the reaction S-methyl-5'-thioadenosine + H2O + H(+) = S-methyl-5'-thioinosine + NH4(+). It functions in the pathway purine metabolism; purine nucleoside salvage. With respect to regulation, inhibited by coformycin and methylthiocoformycin (MT-coformycin). In terms of biological role, catalyzes the hydrolytic deamination of adenosine to produce inosine. Unlike mammalian adenosine deaminases, also catalyzes the deamination of 5'-methylthioadenosine (MTA), a by-product of polyamine biosynthesis, to produce 5'-methylthioinosine (MTI). Plays an essential role in the purine salvage pathway which allows the parasite to use host cell purines for the synthesis of nucleic acids. The protein is Adenosine deaminase of Plasmodium vivax (strain Salvador I).